The primary structure comprises 253 residues: Phosphate import ATP-binding protein PstB (253 aa).

An ABC transporter domain is found at 8–248 (IQVRDLDLFY…PRDKRTEDYI (241 aa)). 40 to 47 (GPSGCGKS) contacts ATP.

This sequence belongs to the ABC transporter superfamily. Phosphate importer (TC 3.A.1.7) family. In terms of assembly, the complex is composed of two ATP-binding proteins (PstB), two transmembrane proteins (PstC and PstA) and a solute-binding protein (PstS).

The protein resides in the cell membrane. The catalysed reaction is phosphate(out) + ATP + H2O = ADP + 2 phosphate(in) + H(+). Functionally, part of the ABC transporter complex PstSACB involved in phosphate import. Responsible for energy coupling to the transport system. This is Phosphate import ATP-binding protein PstB from Clostridium perfringens (strain ATCC 13124 / DSM 756 / JCM 1290 / NCIMB 6125 / NCTC 8237 / Type A).